A 220-amino-acid chain; its full sequence is Ribosomal RNA large subunit methyltransferase E (220 aa).

S-adenosyl-L-methionine-binding residues include G60, W62, D92, D108, and D133. Residue K173 is the Proton acceptor of the active site. The interval 195–220 (APRKPKASRDKSSETFILGRHLKQPR) is disordered.

Belongs to the class I-like SAM-binding methyltransferase superfamily. RNA methyltransferase RlmE family.

The protein localises to the cytoplasm. It carries out the reaction uridine(2552) in 23S rRNA + S-adenosyl-L-methionine = 2'-O-methyluridine(2552) in 23S rRNA + S-adenosyl-L-homocysteine + H(+). Specifically methylates the uridine in position 2552 of 23S rRNA at the 2'-O position of the ribose in the fully assembled 50S ribosomal subunit. This is Ribosomal RNA large subunit methyltransferase E from Burkholderia pseudomallei (strain 1710b).